The sequence spans 766 residues: Isocitrate lyase 2 (766 aa).

106 to 108 (GGW) lines the substrate pocket. Position 177 (Asp-177) interacts with Mg(2+). Cys-215 serves as the catalytic Proton acceptor. Substrate-binding positions include 216 to 217 (GH), Arg-252, 487 to 491 (NLSPS), and Thr-522.

The protein belongs to the isocitrate lyase/PEP mutase superfamily. Isocitrate lyase family. The cofactor is Mg(2+).

The enzyme catalyses D-threo-isocitrate = glyoxylate + succinate. Its pathway is carbohydrate metabolism; glyoxylate cycle; (S)-malate from isocitrate: step 1/2. In terms of biological role, involved in the persistence and virulence of Mycobacterium. Catalyzes the reversible formation of succinate and glyoxylate from isocitrate, a key step of the glyoxylate cycle, which operates as an anaplerotic route for replenishing the tricarboxylic acid cycle during growth on fatty acid substrates. This is Isocitrate lyase 2 (aceA) from Mycobacterium bovis (strain ATCC BAA-935 / AF2122/97).